The following is a 112-amino-acid chain: Peptidyl-prolyl cis-trans isomerase FKBP12 (112 aa).

Residues 1–22 (MGVEKQIIRAGTGPNPSRGQNV) form a disordered region. The PPIase FKBP-type domain maps to 19–112 (GQNVTVHCTG…EFEIEVLRAQ (94 aa)). Cys-26 and Cys-80 are joined by a disulfide.

The protein belongs to the FKBP-type PPIase family. As to quaternary structure, interacts with FK506.

The protein resides in the cytoplasm. The catalysed reaction is [protein]-peptidylproline (omega=180) = [protein]-peptidylproline (omega=0). Its function is as follows. PPIases accelerate the folding of proteins. It catalyzes the cis-trans isomerization of proline imidic peptide bonds in oligopeptides. The chain is Peptidyl-prolyl cis-trans isomerase FKBP12 (FKBP12) from Vicia faba (Broad bean).